Consider the following 1042-residue polypeptide: Diacylglycerol lipase-alpha (1042 aa).

The Cytoplasmic portion of the chain corresponds to 1 to 22 (MPGIVVFRRRWSVGSDDLVLPA). The chain crosses the membrane as a helical span at residues 23–43 (IFLFLLHTTWFVILSVVLFGL). The Extracellular portion of the chain corresponds to 44-60 (VYNPHEACSLNLVDHGR). Residues 61-81 (GYLGILLSCMIAEMAIIWLSM) traverse the membrane as a helical segment. Residues 82–101 (RGGILYTEPRDSMQYVLYVR) lie on the Cytoplasmic side of the membrane. The chain crosses the membrane as a helical span at residues 102-122 (LAILVIEFIYAIVGIVWLTQY). The Extracellular segment spans residues 123–136 (YTSCNDLTAKNVTL). The N-linked (GlcNAc...) asparagine glycan is linked to Asn133. Residues 137 to 157 (GMVVCNWVVILSVCITVLCVF) form a helical membrane-spanning segment. The Cytoplasmic segment spans residues 158 to 1042 (DPTGRTFVKL…KQDELVISAR (885 aa)). Catalysis depends on charge relay system residues Ser472 and Asp524. Phosphoserine is present on residues Ser727, Ser729, Ser732, Ser743, Ser782, Ser784, Ser806, Ser808, Ser833, Ser847, and Ser952. Residues 846 to 903 (LSKHSQDTQPLEAALGSGGVTPERPPSAAANDEEEEVGGGGGGPASRGELALHNGRLG) form a disordered region. Positions 1014 to 1042 (LAADKIRTSTPTGHGASPAKQDELVISAR) are disordered. A Phosphothreonine modification is found at Thr1023.

It belongs to the AB hydrolase superfamily. Lipase family. In terms of assembly, interacts (via C-terminal) with CAMK2A; leading to the phosphorylation and inhibition of DAGLA enzymatic activity. Interacts (via PPXXF motif) with HOMER1 and HOMER2; this interaction is required for DAGLA membrane localization. Requires Ca(2+) as cofactor. In terms of processing, phosphorylated at Ser-782 and Ser-808 by CAMK2A; phosphorylation by CAMK2A inhibits diacylglycerol lipase activity. As to expression, highly expressed in brain and pancreas.

It is found in the cell membrane. The protein localises to the postsynaptic density membrane. It localises to the early endosome membrane. The protein resides in the cell projection. Its subcellular location is the dendritic spine membrane. It catalyses the reaction a 1,2-diacyl-sn-glycerol + H2O = a 2-acylglycerol + a fatty acid + H(+). It carries out the reaction 1-octadecanoyl-2-(5Z,8Z,11Z,14Z-eicosatetraenoyl)-sn-glycerol + H2O = 2-(5Z,8Z,11Z,14Z-eicosatetraenoyl)-glycerol + octadecanoate + H(+). The enzyme catalyses 1,2-di-(9Z-octadecenoyl)-sn-glycerol + H2O = 2-(9Z-octadecenoyl)-glycerol + (9Z)-octadecenoate + H(+). The catalysed reaction is 1-(9Z-octadecenoyl)-2-(5Z,8Z,11Z,14Z-eicosatetraenoyl)-sn-glycerol + H2O = 2-(5Z,8Z,11Z,14Z-eicosatetraenoyl)-glycerol + (9Z)-octadecenoate + H(+). It catalyses the reaction 1-(9Z-octadecenoyl)-2-octadecanoyl-sn-glycerol + H2O = 2-octadecanoylglycerol + (9Z)-octadecenoate + H(+). It carries out the reaction 1-(9Z-octadecenoyl)-2-(9Z,12Z-octadecadienoyl)-sn-glycerol + H2O = 2-(9Z,12Z-octadecadienoyl)-glycerol + (9Z)-octadecenoate + H(+). The enzyme catalyses 1-(9Z-octadecenoyl)-2-O-(5Z,8Z,11Z,14Z-eicosatetraenyl)-sn-glycerol + H2O = 2-O-(5Z,8Z,11Z,14Z)-eicosatetraenylglycerol + (9Z)-octadecenoate + H(+). With respect to regulation, inhibited by 1,2,3-triazole urea covalent inhibitors KT172, DH376 and DO34. Inhibited by p-hydroxy-mercuri-benzoate and HgCl(2), but not to PMSF. Also inhibited by RHC80267. Diacylglycerol lipase activity is inhibited by the phosphorylation of Ser-782 and Ser-808 by CAMK2A. Functionally, serine hydrolase that hydrolyzes arachidonic acid-esterified diacylglycerols (DAGs) to produce the principal endocannabinoid, 2-arachidonoylglycerol (2-AG). Preferentially hydrolyzes sn-1 fatty acids from diacylglycerols (DAG) that contain arachidonic acid (AA) esterified at the sn-2 position to biosynthesize 2-AG. Has negligible activity against other lipids including monoacylglycerols and phospholipids. Plays a key role in regulating 2-AG signaling in the central nervous system (CNS). Regulates 2-AG involved in retrograde suppression at central synapses. Supports axonal growth during development and adult neurogenesis. Plays a role for eCB signaling in the physiological regulation of anxiety and depressive behaviors. Also regulates neuroinflammatory responses in the brain, in particular, LPS-induced microglial activation. This chain is Diacylglycerol lipase-alpha (DAGLA), found in Homo sapiens (Human).